The chain runs to 366 residues: Carbamoyl phosphate synthase small chain (366 aa).

A CPSase region spans residues 1-170 (MLKKRYLVLE…TKSPYVSTGY (170 aa)). L-glutamine contacts are provided by Ser47, Gly221, and Gly223. The Glutamine amidotransferase type-1 domain maps to 173–360 (SVVLVDFGKK…IDMINEYKTK (188 aa)). Catalysis depends on Cys248, which acts as the Nucleophile. Residues Leu249, Gln252, Asn290, Gly292, and Tyr293 each contribute to the L-glutamine site. Catalysis depends on residues His333 and Glu335.

This sequence belongs to the CarA family. In terms of assembly, composed of two chains; the small (or glutamine) chain promotes the hydrolysis of glutamine to ammonia, which is used by the large (or ammonia) chain to synthesize carbamoyl phosphate. Tetramer of heterodimers (alpha,beta)4.

It carries out the reaction hydrogencarbonate + L-glutamine + 2 ATP + H2O = carbamoyl phosphate + L-glutamate + 2 ADP + phosphate + 2 H(+). The catalysed reaction is L-glutamine + H2O = L-glutamate + NH4(+). Its pathway is amino-acid biosynthesis; L-arginine biosynthesis; carbamoyl phosphate from bicarbonate: step 1/1. It participates in pyrimidine metabolism; UMP biosynthesis via de novo pathway; (S)-dihydroorotate from bicarbonate: step 1/3. Functionally, small subunit of the glutamine-dependent carbamoyl phosphate synthetase (CPSase). CPSase catalyzes the formation of carbamoyl phosphate from the ammonia moiety of glutamine, carbonate, and phosphate donated by ATP, constituting the first step of 2 biosynthetic pathways, one leading to arginine and/or urea and the other to pyrimidine nucleotides. The small subunit (glutamine amidotransferase) binds and cleaves glutamine to supply the large subunit with the substrate ammonia. This is Carbamoyl phosphate synthase small chain from Staphylococcus saprophyticus subsp. saprophyticus (strain ATCC 15305 / DSM 20229 / NCIMB 8711 / NCTC 7292 / S-41).